The primary structure comprises 434 residues: Probable carboxypeptidase BDCG_03757 (434 aa).

The first 20 residues, 1–20 (MKLSHLAAALSAQLVAPVAA), serve as a signal peptide directing secretion. N136 and N150 each carry an N-linked (GlcNAc...) asparagine glycan. A Zn(2+)-binding site is contributed by D160. E192 serves as the catalytic Proton acceptor. E193 provides a ligand contact to Zn(2+). An N-linked (GlcNAc...) asparagine glycan is attached at N343.

The protein belongs to the peptidase M20A family. Zn(2+) serves as cofactor.

Its subcellular location is the secreted. This chain is Probable carboxypeptidase BDCG_03757, found in Ajellomyces dermatitidis (strain ER-3 / ATCC MYA-2586) (Blastomyces dermatitidis).